Here is a 1180-residue protein sequence, read N- to C-terminus: DNA-directed RNA polymerase subunit beta (1180 aa).

It belongs to the RNA polymerase beta chain family. The RNAP catalytic core consists of 2 alpha, 1 beta, 1 beta' and 1 omega subunit. When a sigma factor is associated with the core the holoenzyme is formed, which can initiate transcription.

It carries out the reaction RNA(n) + a ribonucleoside 5'-triphosphate = RNA(n+1) + diphosphate. Its function is as follows. DNA-dependent RNA polymerase catalyzes the transcription of DNA into RNA using the four ribonucleoside triphosphates as substrates. In Macrococcus caseolyticus (strain JCSC5402) (Macrococcoides caseolyticum), this protein is DNA-directed RNA polymerase subunit beta.